A 321-amino-acid polypeptide reads, in one-letter code: uncharacterized protein (321 aa).

Residues 130–314 enclose the Exonuclease domain; sequence NLVYDLETTG…NDVDALIKIM (185 aa).

This is an uncharacterized protein from Acanthamoeba polyphaga (Amoeba).